Reading from the N-terminus, the 290-residue chain is MKPSSEEEGELVQGVGPWDECFEVAVQLALRAGQIIRKALTEEKRVSTKTSAADLVTETDHRVEDLIVSELRKRFPSHRFIAEEATASGAKCVLTHSPTWIIDPIDGTCNFVHRFPTVAVSIGFAVHQELEFGVIHHCTEERLYTGRRGQGAFCNGQRLQVSRETDLAKALVLTEIGPKRDPDTLKVFLSNMERLLHAKAHGVRVIGSSTLALCYLASGAADAYYQFGLHCWDLAAATVIIREAGGIVIDTSGGPLDLMSCRVVAAGTREMAVLIAQALQTINYGRDDEK.

Positions 83, 103, 105, and 106 each coordinate Mg(2+). Residue glutamate 83 participates in substrate binding. Substrate-binding positions include 105-108 (IDGT), 207-209 (GSS), glutamine 226, and aspartate 233. Aspartate 233 lines the Mg(2+) pocket.

This sequence belongs to the inositol monophosphatase superfamily. As to quaternary structure, homodimer. Requires Mg(2+) as cofactor. Mostly expressed in brain, small intestine, heart, kidney, and spleen (at protein level).

It localises to the cytoplasm. It carries out the reaction a myo-inositol phosphate + H2O = myo-inositol + phosphate. It catalyses the reaction 1D-myo-inositol 1-phosphate + H2O = myo-inositol + phosphate. The enzyme catalyses 1D-myo-inositol 2-phosphate + H2O = myo-inositol + phosphate. The catalysed reaction is 1D-myo-inositol 3-phosphate + H2O = myo-inositol + phosphate. It carries out the reaction 1D-myo-inositol 4-phosphate + H2O = myo-inositol + phosphate. It catalyses the reaction 1D-myo-inositol 5-phosphate + H2O = myo-inositol + phosphate. The enzyme catalyses 1D-myo-inositol 6-phosphate + H2O = myo-inositol + phosphate. The catalysed reaction is alpha-D-glucose 1-phosphate + H2O = D-glucose + phosphate. It carries out the reaction glycerol 2-phosphate + H2O = glycerol + phosphate. It catalyses the reaction adenosine 2'-phosphate + H2O = adenosine + phosphate. It participates in polyol metabolism; myo-inositol biosynthesis; myo-inositol from D-glucose 6-phosphate: step 2/2. Phosphatase that can use myo-inositol monophosphates, myo-inositol 1,4-diphosphate, scyllo-inositol-1,4-diphosphate, glucose-1-phosphate, beta-glycerophosphate and 2'-AMP as substrates in vitro. No physiological substrates has been described yet. Has been implicated as the pharmacological target for lithium Li(+) action in brain. This is Inositol monophosphatase 2 from Mus musculus (Mouse).